The following is a 567-amino-acid chain: MSSRLGAVPATSGPTTFKQQRSTRIVGAKNSRTQCSIKDNSFQYTIPHDDSLSGSSSASSCEPVSDFPASFRKSAYWMKMRRIKPAATSHVEGSGGVSAKGKRKPRQEEDEDYREFPQKKHKLYGRKQRPKTQPNPKSQARRIRKEPPVYAAGSLEEQWYLEIVDKGSVSCPTCQAVGRKTIEGLKKHMENCKQEMFTCHHCGKQLRSLAGMKYHVMANHNSLPILKAGDEIDEPSERERLRTVLKRLGKLRCMRESCSSSFTSIMGYLYHVRKCGKGAAELEKMTLKCHHCGKPYRSKAGLAYHLRSEHGPISFFPESGQPECLKEMNLESKSGGRVQRRSAKIAVYHLQELASAELAKEWPKRKVLQDLVPDDRKLKYTRPGLPTFSQEVLHKWKTDIKKYHRIQCPNQGCEAVYSSVSGLKAHLGSCTLGNFVAGKYKCLLCQKEFVSESGVKYHINSVHAEDWFVVNPTTTKSFEKLMKIKQRQQEEEKRRQQHRSRRSLRRRQQPGIELPETELSLRVGKDQRRNNEELVVSASCKEPEQEPVPAQFQKVKPPKTNHKRGRK.

The disordered stretch occupies residues 1 to 32 (MSSRLGAVPATSGPTTFKQQRSTRIVGAKNSR). Residues 12 to 23 (SGPTTFKQQRST) are compositionally biased toward polar residues. Residues Lys18 and Lys84 each participate in a glycyl lysine isopeptide (Lys-Gly) (interchain with G-Cter in SUMO2) cross-link. The interval 86 to 148 (AATSHVEGSG…QARRIRKEPP (63 aa)) is disordered. The span at 119 to 130 (KKHKLYGRKQRP) shows a compositional bias: basic residues. A C2H2-type 1 zinc finger spans residues 197–220 (FTCHHCGKQLRSLAGMKYHVMANH). Lys227 is covalently cross-linked (Glycyl lysine isopeptide (Lys-Gly) (interchain with G-Cter in SUMO2)). A C2H2-type 2 zinc finger spans residues 287–310 (LKCHHCGKPYRSKAGLAYHLRSEH). A Glycyl lysine isopeptide (Lys-Gly) (interchain with G-Cter in SUMO2) cross-link involves residue Lys333. A C2H2-type 3; atypical zinc finger spans residues 406 to 430 (IQCPNQGCEAVYSSVSGLKAHLGSC). The C2H2-type 4 zinc-finger motif lies at 440 to 463 (YKCLLCQKEFVSESGVKYHINSVH). The interval 486–567 (QRQQEEEKRR…PKTNHKRGRK (82 aa)) is disordered. Residues 495–508 (RQQHRSRRSLRRRQ) show a composition bias toward basic residues. Positions 523 to 532 (VGKDQRRNNE) are enriched in basic and acidic residues. Residues 556–567 (KPPKTNHKRGRK) are compositionally biased toward basic residues.

Belongs to the krueppel C2H2-type zinc-finger protein family.

Its subcellular location is the nucleus. May be involved in transcriptional regulation. This chain is Zinc finger protein 512 (ZNF512), found in Pongo abelii (Sumatran orangutan).